A 501-amino-acid chain; its full sequence is Lysine--tRNA ligase (501 aa).

Residues Glu411 and Glu418 each coordinate Mg(2+).

Belongs to the class-II aminoacyl-tRNA synthetase family. Homodimer. Mg(2+) serves as cofactor.

Its subcellular location is the cytoplasm. The enzyme catalyses tRNA(Lys) + L-lysine + ATP = L-lysyl-tRNA(Lys) + AMP + diphosphate. This chain is Lysine--tRNA ligase, found in Pseudomonas aeruginosa (strain ATCC 15692 / DSM 22644 / CIP 104116 / JCM 14847 / LMG 12228 / 1C / PRS 101 / PAO1).